We begin with the raw amino-acid sequence, 378 residues long: Succinyl-diaminopimelate desuccinylase (378 aa).

His-77 is a Zn(2+) binding site. Asp-79 is a catalytic residue. Zn(2+) is bound at residue Asp-108. Catalysis depends on Glu-138, which acts as the Proton acceptor. Zn(2+)-binding residues include Glu-139, Glu-167, and His-350.

The protein belongs to the peptidase M20A family. DapE subfamily. In terms of assembly, homodimer. Zn(2+) is required as a cofactor. Co(2+) serves as cofactor.

The enzyme catalyses N-succinyl-(2S,6S)-2,6-diaminopimelate + H2O = (2S,6S)-2,6-diaminopimelate + succinate. It functions in the pathway amino-acid biosynthesis; L-lysine biosynthesis via DAP pathway; LL-2,6-diaminopimelate from (S)-tetrahydrodipicolinate (succinylase route): step 3/3. In terms of biological role, catalyzes the hydrolysis of N-succinyl-L,L-diaminopimelic acid (SDAP), forming succinate and LL-2,6-diaminopimelate (DAP), an intermediate involved in the bacterial biosynthesis of lysine and meso-diaminopimelic acid, an essential component of bacterial cell walls. The sequence is that of Succinyl-diaminopimelate desuccinylase from Erythrobacter litoralis (strain HTCC2594).